Consider the following 107-residue polypeptide: YcgL domain-containing protein Psyc_0800 (107 aa).

Residues 1-95 (MHCDIYKFLK…QDVMRRQAEL (95 aa)) form the YcgL domain.

This Psychrobacter arcticus (strain DSM 17307 / VKM B-2377 / 273-4) protein is YcgL domain-containing protein Psyc_0800.